The following is a 610-amino-acid chain: UvrABC system protein C (610 aa).

Residues 16-94 (SQPGVYRMYD…IKLYQPRYNV (79 aa)) form the GIY-YIG domain. Residues 204–239 (DQVLTQLIARMEKASQDLAFEEAARIRDQIQAVRRV) enclose the UVR domain.

It belongs to the UvrC family. Interacts with UvrB in an incision complex.

The protein localises to the cytoplasm. In terms of biological role, the UvrABC repair system catalyzes the recognition and processing of DNA lesions. UvrC both incises the 5' and 3' sides of the lesion. The N-terminal half is responsible for the 3' incision and the C-terminal half is responsible for the 5' incision. The chain is UvrABC system protein C from Salmonella typhimurium (strain LT2 / SGSC1412 / ATCC 700720).